The following is a 62-amino-acid chain: DNA-directed RNA polymerase subunit Rpo10 (62 aa).

4 residues coordinate Zn(2+): cysteine 6, cysteine 9, cysteine 43, and cysteine 44.

The protein belongs to the archaeal Rpo10/eukaryotic RPB10 RNA polymerase subunit family. As to quaternary structure, part of the RNA polymerase complex. It depends on Zn(2+) as a cofactor.

The protein localises to the cytoplasm. It carries out the reaction RNA(n) + a ribonucleoside 5'-triphosphate = RNA(n+1) + diphosphate. In terms of biological role, DNA-dependent RNA polymerase (RNAP) catalyzes the transcription of DNA into RNA using the four ribonucleoside triphosphates as substrates. This Methanoculleus marisnigri (strain ATCC 35101 / DSM 1498 / JR1) protein is DNA-directed RNA polymerase subunit Rpo10.